Consider the following 174-residue polypeptide: Crossover junction endodeoxyribonuclease RuvC (174 aa).

Active-site residues include aspartate 8, glutamate 67, and aspartate 139. Residues aspartate 8, glutamate 67, and aspartate 139 each coordinate Mg(2+).

It belongs to the RuvC family. In terms of assembly, homodimer which binds Holliday junction (HJ) DNA. The HJ becomes 2-fold symmetrical on binding to RuvC with unstacked arms; it has a different conformation from HJ DNA in complex with RuvA. In the full resolvosome a probable DNA-RuvA(4)-RuvB(12)-RuvC(2) complex forms which resolves the HJ. Mg(2+) is required as a cofactor.

It localises to the cytoplasm. It catalyses the reaction Endonucleolytic cleavage at a junction such as a reciprocal single-stranded crossover between two homologous DNA duplexes (Holliday junction).. The RuvA-RuvB-RuvC complex processes Holliday junction (HJ) DNA during genetic recombination and DNA repair. Endonuclease that resolves HJ intermediates. Cleaves cruciform DNA by making single-stranded nicks across the HJ at symmetrical positions within the homologous arms, yielding a 5'-phosphate and a 3'-hydroxyl group; requires a central core of homology in the junction. The consensus cleavage sequence is 5'-(A/T)TT(C/G)-3'. Cleavage occurs on the 3'-side of the TT dinucleotide at the point of strand exchange. HJ branch migration catalyzed by RuvA-RuvB allows RuvC to scan DNA until it finds its consensus sequence, where it cleaves and resolves the cruciform DNA. This chain is Crossover junction endodeoxyribonuclease RuvC, found in Pseudomonas entomophila (strain L48).